The chain runs to 501 residues: Dipeptide and tripeptide permease A (501 aa).

Topologically, residues 1 to 34 (MSTANNKPTESVSLNAFKQPKSFYLIFSIELWER) are cytoplasmic. A helical membrane pass occupies residues 35–55 (FGYYGLQGIMAVYLVKQLGMS). Topologically, residues 56 to 59 (EADS) are periplasmic. A helical transmembrane segment spans residues 60-80 (ITLFSSFSALVYGLVAIGGWL). Topologically, residues 81–89 (GDKVLGTKR) are cytoplasmic. A helical transmembrane segment spans residues 90 to 110 (VIMLGAIVLAIGYGLVAWSGH). Residue Asp-111 is a topological domain, periplasmic. The helical transmembrane segment at 112-132 (VAIVYMGMATIAVGNGLFKAN) threads the bilayer. Over 133–153 (PSSLLSTCYAKDDPRLDGAFT) the chain is Cytoplasmic. A helical membrane pass occupies residues 154-174 (MYYMSINIGSFFSMLATPWLA). The Periplasmic portion of the chain corresponds to 175–178 (AKFG). The chain crosses the membrane as a helical span at residues 179–199 (WSVAFALSFVGMLITVVNFLF). Over 200-217 (CRSWVKDYGSKPDFEAVH) the chain is Cytoplasmic. Residues 218–238 (FGKLLATIAGVIVLIAIATWL) form a helical membrane-spanning segment. Over 239–246 (LHNQGIAR) the chain is Periplasmic. A helical membrane pass occupies residues 247–267 (MVLGVIALGIVIIFGKEAFAM). Topologically, residues 268 to 274 (QGAARRK) are cytoplasmic. The helical transmembrane segment at 275–295 (MIVAFILMLEAIIFFVLYSQM) threads the bilayer. The Periplasmic segment spans residues 296–320 (PTSLNFFAIRNVEHTILGIAVEPEQ). The chain crosses the membrane as a helical span at residues 321-341 (YQALNPFWIIIGSPILAAIYN). Residues 342-352 (KMGDTLPMPTK) are Cytoplasmic-facing. The chain crosses the membrane as a helical span at residues 353–373 (FAIGMVLCSGAFLVLPLGAKF). Over 374–383 (ATDAGIVSVN) the chain is Periplasmic. Residues 384–404 (WLILSYGLQSIGELMISGLGL) form a helical membrane-spanning segment. Over 405–414 (AMVAQLVPQR) the chain is Cytoplasmic. Residues 415–435 (LMGFIMGSWFLTTAGANLIGG) form a helical membrane-spanning segment. Residues 436 to 459 (YVAGMMAVPENVTDPLMSLEVYGR) lie on the Periplasmic side of the membrane. The chain crosses the membrane as a helical span at residues 460-480 (VFLQIGVATAVIAALMLITAP). Over 481–501 (KLNRMTQDDEENAKAAKTATA) the chain is Cytoplasmic.

This sequence belongs to the major facilitator superfamily. Proton-dependent oligopeptide transporter (POT/PTR) (TC 2.A.17) family. DtpA subfamily.

The protein resides in the cell inner membrane. Functionally, proton-dependent permease that transports di- and tripeptides. In Citrobacter koseri (strain ATCC BAA-895 / CDC 4225-83 / SGSC4696), this protein is Dipeptide and tripeptide permease A.